Consider the following 110-residue polypeptide: MIKLRLKRFGKKRETSFRLVACNSTSRRDGRPLQELGFYNPRTKETRLDTEALRTRLGQGAQPTDAVRTLLEKGGLLEKKVRPAEVLGKQKQEKERSAKKKDATASETSE.

A compositionally biased stretch (basic and acidic residues) spans 81-104 (VRPAEVLGKQKQEKERSAKKKDAT). The tract at residues 81–110 (VRPAEVLGKQKQEKERSAKKKDATASETSE) is disordered.

This sequence belongs to the bacterial ribosomal protein bS16 family.

The sequence is that of Small ribosomal subunit protein bS16 from Prochlorococcus marinus (strain NATL1A).